Here is a 262-residue protein sequence, read N- to C-terminus: MARGPKKHLKRLNAPKSWMLDKLGGVFAPRPSTGPHKLRESLPLIIMLRNRLKYALTGAEVKKIVKQRLIKVDGKVRTDTNYPAGFMDVVTIEKTGEFFRLLYDVKGRFTLHRITPEEAKYKLCRVKRVQVGPKGVPFLTTHDARTIRYPDPLIKVNDTVKVDLATGKIDDYIKFDSGNVCMVTGGHNLGRVGVITSRERHPGSFDIVHVKDSQGHSFATRLNYIFVIGKSTKPYISLPRGKGIKLSVAEERDRRLQAKSQH.

In terms of domain architecture, S4 RNA-binding spans 42–105; sequence LPLIIMLRNR…GEFFRLLYDV (64 aa).

This sequence belongs to the eukaryotic ribosomal protein eS4 family.

In Ixodes scapularis (Black-legged tick), this protein is Small ribosomal subunit protein eS4 (RpS4).